The following is a 242-amino-acid chain: HTH domain-truncated transcriptional regulator QseD (242 aa).

Belongs to the LysR transcriptional regulatory family.

Its function is as follows. Represses EHEC virulence expression. Down-regulates expression of LEE (locus of enterocyte effacement) and iraD genes, and alters AE (attaching and effacing) lesion formation. May regulate transcription through interactions with another HTH DNA-binding protein. The chain is HTH domain-truncated transcriptional regulator QseD (qseD) from Escherichia coli O157:H7.